A 158-amino-acid chain; its full sequence is Large ribosomal subunit protein uL15 (158 aa).

Over residues 1-13 (MKLNEIKDNEGST) the composition is skewed to basic and acidic residues. Positions 1 to 45 (MKLNEIKDNEGSTHSRKRLGRGIGSGSGKTGGRGVKGQKSRSGVA) are disordered. A compositionally biased stretch (gly residues) spans 21–35 (RGIGSGSGKTGGRGV).

Belongs to the universal ribosomal protein uL15 family. In terms of assembly, part of the 50S ribosomal subunit.

Binds to the 23S rRNA. The sequence is that of Large ribosomal subunit protein uL15 from Rhizobium leguminosarum bv. trifolii (strain WSM2304).